A 399-amino-acid chain; its full sequence is O-antigen polymerase (399 aa).

10 consecutive transmembrane segments (helical) span residues 4–24, 37–57, 64–84, 97–117, 151–171, 185–205, 222–242, 309–329, 353–373, and 374–394; these read FPPGAILRDVLNVFFVALVLV, LVFTIFSWSAVILWVIALTIF, AIMGGRSYILFPAVFIALVIL, IVCYIIFLMFMVATISIIDVL, GGFSDALNFGYMLTLGVLLCM, IISFVLFIAICMSLTRGAILV, FCGITLFVIIIPVLAISTNIF, FFWIALETGIIGLIINIIYLA, LYFLFGSIYFISAALSSAPSS, and STFSIYYWTVLALIPFLKLTN.

The protein resides in the cell inner membrane. It catalyses the reaction n lipid-linked O-antigen repeat units = a lipid-linked O antigen + (n-1) polyisoprenyl diphosphate.. It functions in the pathway bacterial outer membrane biogenesis; LPS O-antigen biosynthesis. Polymerase involved in the biosynthesis of the lipopolysaccharide (LPS). Catalyzes the polymerization of the O-antigen repeat units on the periplasmic face of the inner membrane, leading to the formation of the lipid-linked O-antigen molecule. The polypeptide is O-antigen polymerase (Salmonella muenchen).